A 205-amino-acid chain; its full sequence is Holliday junction branch migration complex subunit RuvA (205 aa).

The domain I stretch occupies residues 1–64 (MIGKLKGVID…EDQIKLFGFR (64 aa)). Positions 65–143 (TDHEREWFRL…SFANVDPTVV (79 aa)) are domain II. Positions 144–154 (HLAGDLDDQRA) are flexible linker. The domain III stretch occupies residues 154–205 (APRPVRDAISALVNLGYGQPQATAAIAAASRGAGENAETAQLIRLGLKELSK).

Belongs to the RuvA family. In terms of assembly, homotetramer. Forms an RuvA(8)-RuvB(12)-Holliday junction (HJ) complex. HJ DNA is sandwiched between 2 RuvA tetramers; dsDNA enters through RuvA and exits via RuvB. An RuvB hexamer assembles on each DNA strand where it exits the tetramer. Each RuvB hexamer is contacted by two RuvA subunits (via domain III) on 2 adjacent RuvB subunits; this complex drives branch migration. In the full resolvosome a probable DNA-RuvA(4)-RuvB(12)-RuvC(2) complex forms which resolves the HJ.

The protein resides in the cytoplasm. In terms of biological role, the RuvA-RuvB-RuvC complex processes Holliday junction (HJ) DNA during genetic recombination and DNA repair, while the RuvA-RuvB complex plays an important role in the rescue of blocked DNA replication forks via replication fork reversal (RFR). RuvA specifically binds to HJ cruciform DNA, conferring on it an open structure. The RuvB hexamer acts as an ATP-dependent pump, pulling dsDNA into and through the RuvAB complex. HJ branch migration allows RuvC to scan DNA until it finds its consensus sequence, where it cleaves and resolves the cruciform DNA. This Nitrobacter winogradskyi (strain ATCC 25391 / DSM 10237 / CIP 104748 / NCIMB 11846 / Nb-255) protein is Holliday junction branch migration complex subunit RuvA.